We begin with the raw amino-acid sequence, 192 residues long: dTTP/UTP pyrophosphatase (192 aa).

The Proton acceptor role is filled by Asp65.

Belongs to the Maf family. YhdE subfamily. A divalent metal cation serves as cofactor.

Its subcellular location is the cytoplasm. The catalysed reaction is dTTP + H2O = dTMP + diphosphate + H(+). It catalyses the reaction UTP + H2O = UMP + diphosphate + H(+). Nucleoside triphosphate pyrophosphatase that hydrolyzes dTTP and UTP. May have a dual role in cell division arrest and in preventing the incorporation of modified nucleotides into cellular nucleic acids. The sequence is that of dTTP/UTP pyrophosphatase from Fusobacterium nucleatum subsp. nucleatum (strain ATCC 25586 / DSM 15643 / BCRC 10681 / CIP 101130 / JCM 8532 / KCTC 2640 / LMG 13131 / VPI 4355).